The chain runs to 78 residues: MGNLNFVLSPLDQFEVRDLLSINANLLGNFHLSLTNIGLYLTIGIFLILTYSLLATNNNKIIPNNWSISQESIYATVH.

A helical transmembrane segment spans residues 34 to 54 (LTNIGLYLTIGIFLILTYSLL).

This sequence belongs to the ATPase A chain family. F-type ATPases have 2 components, CF(1) - the catalytic core - and CF(0) - the membrane proton channel. CF(1) has five subunits: alpha(3), beta(3), gamma(1), delta(1), epsilon(1). CF(0) has three main subunits: a, b and c.

The protein resides in the mitochondrion inner membrane. Functionally, mitochondrial membrane ATP synthase (F(1)F(0) ATP synthase or Complex V) produces ATP from ADP in the presence of a proton gradient across the membrane which is generated by electron transport complexes of the respiratory chain. F-type ATPases consist of two structural domains, F(1) - containing the extramembraneous catalytic core and F(0) - containing the membrane proton channel, linked together by a central stalk and a peripheral stalk. During catalysis, ATP synthesis in the catalytic domain of F(1) is coupled via a rotary mechanism of the central stalk subunits to proton translocation. Key component of the proton channel; it may play a direct role in the translocation of protons across the membrane. The protein is ATP synthase subunit a (atp6) of Aspergillus amstelodami.